The sequence spans 432 residues: Glutamate-1-semialdehyde 2,1-aminomutase 2 (432 aa).

Lysine 268 is modified (N6-(pyridoxal phosphate)lysine).

The protein belongs to the class-III pyridoxal-phosphate-dependent aminotransferase family. HemL subfamily. In terms of assembly, homodimer. Requires pyridoxal 5'-phosphate as cofactor.

It is found in the cytoplasm. It carries out the reaction (S)-4-amino-5-oxopentanoate = 5-aminolevulinate. The protein operates within porphyrin-containing compound metabolism; protoporphyrin-IX biosynthesis; 5-aminolevulinate from L-glutamyl-tRNA(Glu): step 2/2. In Listeria monocytogenes serotype 4b (strain F2365), this protein is Glutamate-1-semialdehyde 2,1-aminomutase 2.